A 131-amino-acid chain; its full sequence is Large ribosomal subunit protein bL17 (131 aa).

Belongs to the bacterial ribosomal protein bL17 family. In terms of assembly, part of the 50S ribosomal subunit. Contacts protein L32.

This chain is Large ribosomal subunit protein bL17, found in Thermotoga sp. (strain RQ2).